A 254-amino-acid polypeptide reads, in one-letter code: Wall-associated protein (254 aa).

The disordered stretch occupies residues 25-46 (DRVEPKEEPPKVPQAPKRDLKP).

It localises to the secreted. It is found in the cell wall. In Geobacillus stearothermophilus (Bacillus stearothermophilus), this protein is Wall-associated protein (wapA').